Here is a 344-residue protein sequence, read N- to C-terminus: Peroxidase 36 (344 aa).

The first 28 residues, 1 to 28 (MNTKTVKSMAGIVLSQISLVALFPLCIC), serve as a signal peptide directing secretion. 4 cysteine pairs are disulfide-bonded: Cys50/Cys130, Cys83/Cys88, Cys136/Cys337, and Cys215/Cys247. Residue His81 is the Proton acceptor of the active site. The Ca(2+) site is built by Asp82, Val85, Gly87, Asp89, and Ser91. Position 178 (Pro178) interacts with substrate. His208 lines the heme b pocket. A Ca(2+)-binding site is contributed by Thr209. N-linked (GlcNAc...) asparagine glycosylation is present at Asn224. Residues Asp260, Thr263, and Asp268 each coordinate Ca(2+).

It belongs to the peroxidase family. Classical plant (class III) peroxidase subfamily. The cofactor is heme b. Ca(2+) serves as cofactor.

It is found in the secreted. The enzyme catalyses 2 a phenolic donor + H2O2 = 2 a phenolic radical donor + 2 H2O. Removal of H(2)O(2), oxidation of toxic reductants, biosynthesis and degradation of lignin, suberization, auxin catabolism, response to environmental stresses such as wounding, pathogen attack and oxidative stress. These functions might be dependent on each isozyme/isoform in each plant tissue. The sequence is that of Peroxidase 36 (PER36) from Arabidopsis thaliana (Mouse-ear cress).